The following is a 245-amino-acid chain: Orotidine 5'-phosphate decarboxylase (245 aa).

Residues D22, K44, 71 to 80 (DLKFHDIPNT), T131, R192, Q201, G221, and R222 each bind substrate. Catalysis depends on K73, which acts as the Proton donor.

The protein belongs to the OMP decarboxylase family. Type 1 subfamily. Homodimer.

It carries out the reaction orotidine 5'-phosphate + H(+) = UMP + CO2. The protein operates within pyrimidine metabolism; UMP biosynthesis via de novo pathway; UMP from orotate: step 2/2. Functionally, catalyzes the decarboxylation of orotidine 5'-monophosphate (OMP) to uridine 5'-monophosphate (UMP). This chain is Orotidine 5'-phosphate decarboxylase, found in Salmonella typhi.